Consider the following 307-residue polypeptide: Aspartate carbamoyltransferase catalytic subunit (307 aa).

Positions 58 and 59 each coordinate carbamoyl phosphate. Lys-86 provides a ligand contact to L-aspartate. Arg-108, His-136, and Gln-139 together coordinate carbamoyl phosphate. The L-aspartate site is built by Arg-169 and Arg-223. Residues Gly-264 and Pro-265 each coordinate carbamoyl phosphate.

It belongs to the aspartate/ornithine carbamoyltransferase superfamily. ATCase family. In terms of assembly, heterododecamer (2C3:3R2) of six catalytic PyrB chains organized as two trimers (C3), and six regulatory PyrI chains organized as three dimers (R2).

The enzyme catalyses carbamoyl phosphate + L-aspartate = N-carbamoyl-L-aspartate + phosphate + H(+). Its pathway is pyrimidine metabolism; UMP biosynthesis via de novo pathway; (S)-dihydroorotate from bicarbonate: step 2/3. Functionally, catalyzes the condensation of carbamoyl phosphate and aspartate to form carbamoyl aspartate and inorganic phosphate, the committed step in the de novo pyrimidine nucleotide biosynthesis pathway. This Syntrophus aciditrophicus (strain SB) protein is Aspartate carbamoyltransferase catalytic subunit.